We begin with the raw amino-acid sequence, 110 residues long: U-scoloptoxin(16)-Er6a (110 aa).

The first 26 residues, 1 to 26 (MTSTRKLSVSCLIVFMVSSLIAVSSG), serve as a signal peptide directing secretion.

Belongs to the scoloptoxin-16 family. In terms of processing, contains 4 disulfide bonds. In terms of tissue distribution, expressed by the venom gland.

It localises to the secreted. This Ethmostigmus rubripes (Giant centipede) protein is U-scoloptoxin(16)-Er6a.